The following is a 233-amino-acid chain: 7-cyano-7-deazaguanine synthase 2 (233 aa).

8–18 lines the ATP pocket; it reads LSGGLDSTTCM. 4 residues coordinate Zn(2+): cysteine 186, cysteine 194, cysteine 197, and cysteine 200.

Belongs to the QueC family. In terms of assembly, homodimer. Zn(2+) is required as a cofactor.

It carries out the reaction 7-carboxy-7-deazaguanine + NH4(+) + ATP = 7-cyano-7-deazaguanine + ADP + phosphate + H2O + H(+). It functions in the pathway purine metabolism; 7-cyano-7-deazaguanine biosynthesis. Functionally, catalyzes the ATP-dependent conversion of 7-carboxy-7-deazaguanine (CDG) to 7-cyano-7-deazaguanine (preQ(0)). The sequence is that of 7-cyano-7-deazaguanine synthase 2 from Desulfitobacterium hafniense (strain Y51).